Here is a 348-residue protein sequence, read N- to C-terminus: Dihydroorotase (348 aa).

Zn(2+) contacts are provided by H13 and H15. Substrate contacts are provided by residues 15-17 (HLR) and N41. Positions 99, 136, and 174 each coordinate Zn(2+). K99 carries the post-translational modification N6-carboxylysine. Position 136 (H136) interacts with substrate. Position 219 (L219) interacts with substrate. D247 is a binding site for Zn(2+). D247 is a catalytic residue. 2 residues coordinate substrate: H251 and A263.

This sequence belongs to the metallo-dependent hydrolases superfamily. DHOase family. Class II DHOase subfamily. In terms of assembly, homodimer. Requires Zn(2+) as cofactor.

It carries out the reaction (S)-dihydroorotate + H2O = N-carbamoyl-L-aspartate + H(+). It functions in the pathway pyrimidine metabolism; UMP biosynthesis via de novo pathway; (S)-dihydroorotate from bicarbonate: step 3/3. Its function is as follows. Catalyzes the reversible cyclization of carbamoyl aspartate to dihydroorotate. This is Dihydroorotase from Rhizobium johnstonii (strain DSM 114642 / LMG 32736 / 3841) (Rhizobium leguminosarum bv. viciae).